The chain runs to 320 residues: Cytochrome f (320 aa).

A signal peptide spans M1 to A35. Heme contacts are provided by Y36, C56, C59, and H60. The helical transmembrane segment at V286 to K306 threads the bilayer.

The protein belongs to the cytochrome f family. The 4 large subunits of the cytochrome b6-f complex are cytochrome b6, subunit IV (17 kDa polypeptide, petD), cytochrome f and the Rieske protein, while the 4 small subunits are PetG, PetL, PetM and PetN. The complex functions as a dimer. Heme serves as cofactor.

The protein localises to the plastid thylakoid membrane. Functionally, component of the cytochrome b6-f complex, which mediates electron transfer between photosystem II (PSII) and photosystem I (PSI), cyclic electron flow around PSI, and state transitions. This is Cytochrome f from Cuscuta exaltata (Tall dodder).